A 331-amino-acid polypeptide reads, in one-letter code: Phosphate acyltransferase (331 aa).

The protein belongs to the PlsX family. Homodimer. Probably interacts with PlsY.

The protein localises to the cytoplasm. It carries out the reaction a fatty acyl-[ACP] + phosphate = an acyl phosphate + holo-[ACP]. It participates in lipid metabolism; phospholipid metabolism. Functionally, catalyzes the reversible formation of acyl-phosphate (acyl-PO(4)) from acyl-[acyl-carrier-protein] (acyl-ACP). This enzyme utilizes acyl-ACP as fatty acyl donor, but not acyl-CoA. The chain is Phosphate acyltransferase from Exiguobacterium sibiricum (strain DSM 17290 / CCUG 55495 / CIP 109462 / JCM 13490 / 255-15).